Reading from the N-terminus, the 189-residue chain is Mitochondrial FAD-linked sulfhydryl oxidase ERV1 (189 aa).

One can recognise an ERV/ALR sulfhydryl oxidase domain in the interval 83–183; sequence DPPDVEQLGR…FDCNFWEKRW (101 aa). FAD contacts are provided by residues 88-95, histidine 99, and tyrosine 128; that span reads EQLGRSSW. Disulfide bonds link cysteine 130–cysteine 133 and cysteine 159–cysteine 176. FAD contacts are provided by residues 159–171 and 182–183; these read CEAH…KLRK and RW.

As to quaternary structure, homodimer. Interacts with MIA40, forming transient intermolecular disulfide bridges. It depends on FAD as a cofactor.

The protein resides in the mitochondrion intermembrane space. It catalyses the reaction 2 R'C(R)SH + O2 = R'C(R)S-S(R)CR' + H2O2. FAD-dependent sulfhydryl oxidase that catalyzes disulfide bond formation. Required for the import and folding of small cysteine-containing proteins in the mitochondrial intermembrane space (IMS). Forms a redox cycle with MIA40 that involves a disulfide relay system. Important for maintaining the cysteine residues in MIA40 in an oxidized state. Reduced ERV1 is reoxidized by cytochrome c. Required for the maturation of cytoplasmic, but not of mitochondrial Fe/S proteins. In Saccharomyces cerevisiae (strain ATCC 204508 / S288c) (Baker's yeast), this protein is Mitochondrial FAD-linked sulfhydryl oxidase ERV1 (ERV1).